The following is a 670-amino-acid chain: Meiotic sister-chromatid recombination protein 6, mitochondrial (670 aa).

The transit peptide at 1 to 27 (MLFSRASKIRVSQLMRRLQSTAVGRAA) directs the protein to the mitochondrion.

It localises to the mitochondrion. Its function is as follows. May be involved in the control of meiotic sister-chromatid recombination. The chain is Meiotic sister-chromatid recombination protein 6, mitochondrial (MSC6) from Eremothecium gossypii (strain ATCC 10895 / CBS 109.51 / FGSC 9923 / NRRL Y-1056) (Yeast).